The sequence spans 501 residues: Aldehyde dehydrogenase family 2 member C4 (501 aa).

An NAD(+)-binding site is contributed by 245–250; sequence GSTDVG. E268 (proton acceptor) is an active-site residue. C302 (nucleophile) is an active-site residue.

Belongs to the aldehyde dehydrogenase family. Homotetramer.

Its subcellular location is the cytoplasm. It localises to the cytosol. It carries out the reaction an aldehyde + NAD(+) + H2O = a carboxylate + NADH + 2 H(+). Its function is as follows. Involved in ferulic acid and sinapic acid biosynthesis by oxidation of conyferylaldehyde and sinapaldehyde, respectively. Can oxidize L-lactaldehyde. Possesses activity on acetaldehyde and glycolaldehyde in vitro. This chain is Aldehyde dehydrogenase family 2 member C4 (ALDH2C4), found in Arabidopsis thaliana (Mouse-ear cress).